Reading from the N-terminus, the 418-residue chain is Aspartate aminotransferase, cytoplasmic (418 aa).

Ser-2 carries the post-translational modification N-acetylserine. L-aspartate-binding residues include Gly-38, Trp-135, and Asn-188. Position 255 is an N6-(pyridoxal phosphate)lysine (Lys-255). Arg-387 contributes to the L-aspartate binding site. Ser-389 is modified (phosphoserine).

It belongs to the class-I pyridoxal-phosphate-dependent aminotransferase family. As to quaternary structure, homodimer. Pyridoxal 5'-phosphate is required as a cofactor.

It localises to the cytoplasm. Its subcellular location is the peroxisome. It carries out the reaction L-aspartate + 2-oxoglutarate = oxaloacetate + L-glutamate. Functionally, plays a key role in amino acid metabolism. This chain is Aspartate aminotransferase, cytoplasmic (AAT2), found in Saccharomyces cerevisiae (strain ATCC 204508 / S288c) (Baker's yeast).